A 373-amino-acid polypeptide reads, in one-letter code: Queuine tRNA-ribosyltransferase (373 aa).

Aspartate 93 functions as the Proton acceptor in the catalytic mechanism. Substrate contacts are provided by residues 93 to 97 (DSGGF), aspartate 147, glutamine 189, and glycine 216. The interval 247-253 (GVGAPED) is RNA binding. Residue aspartate 266 is the Nucleophile of the active site. Positions 271–275 (TRIAR) are RNA binding; important for wobble base 34 recognition. Zn(2+) contacts are provided by cysteine 304, cysteine 306, cysteine 309, and histidine 335.

The protein belongs to the queuine tRNA-ribosyltransferase family. Homodimer. Within each dimer, one monomer is responsible for RNA recognition and catalysis, while the other monomer binds to the replacement base PreQ1. Zn(2+) serves as cofactor.

It catalyses the reaction 7-aminomethyl-7-carbaguanine + guanosine(34) in tRNA = 7-aminomethyl-7-carbaguanosine(34) in tRNA + guanine. The protein operates within tRNA modification; tRNA-queuosine biosynthesis. Its function is as follows. Catalyzes the base-exchange of a guanine (G) residue with the queuine precursor 7-aminomethyl-7-deazaguanine (PreQ1) at position 34 (anticodon wobble position) in tRNAs with GU(N) anticodons (tRNA-Asp, -Asn, -His and -Tyr). Catalysis occurs through a double-displacement mechanism. The nucleophile active site attacks the C1' of nucleotide 34 to detach the guanine base from the RNA, forming a covalent enzyme-RNA intermediate. The proton acceptor active site deprotonates the incoming PreQ1, allowing a nucleophilic attack on the C1' of the ribose to form the product. After dissociation, two additional enzymatic reactions on the tRNA convert PreQ1 to queuine (Q), resulting in the hypermodified nucleoside queuosine (7-(((4,5-cis-dihydroxy-2-cyclopenten-1-yl)amino)methyl)-7-deazaguanosine). The sequence is that of Queuine tRNA-ribosyltransferase from Halothermothrix orenii (strain H 168 / OCM 544 / DSM 9562).